A 212-amino-acid polypeptide reads, in one-letter code: Pyridoxine/pyridoxamine 5'-phosphate oxidase (212 aa).

Residues 61–66 (RTVLLK), 76–77 (FT), K82, K83, and Q105 contribute to the FMN site. K66 provides a ligand contact to substrate. Y123, R127, and S131 together coordinate substrate. Residues 140–141 (QS) and W185 each bind FMN. Substrate is bound at residue 191 to 193 (RLH). Position 195 (R195) interacts with FMN.

This sequence belongs to the pyridoxamine 5'-phosphate oxidase family. As to quaternary structure, homodimer. It depends on FMN as a cofactor.

It carries out the reaction pyridoxamine 5'-phosphate + O2 + H2O = pyridoxal 5'-phosphate + H2O2 + NH4(+). It catalyses the reaction pyridoxine 5'-phosphate + O2 = pyridoxal 5'-phosphate + H2O2. It participates in cofactor metabolism; pyridoxal 5'-phosphate salvage; pyridoxal 5'-phosphate from pyridoxamine 5'-phosphate: step 1/1. The protein operates within cofactor metabolism; pyridoxal 5'-phosphate salvage; pyridoxal 5'-phosphate from pyridoxine 5'-phosphate: step 1/1. In terms of biological role, catalyzes the oxidation of either pyridoxine 5'-phosphate (PNP) or pyridoxamine 5'-phosphate (PMP) into pyridoxal 5'-phosphate (PLP). The sequence is that of Pyridoxine/pyridoxamine 5'-phosphate oxidase from Vesicomyosocius okutanii subsp. Calyptogena okutanii (strain HA).